A 1164-amino-acid polypeptide reads, in one-letter code: DNA-directed RNA polymerase 132 kDa polypeptide (1164 aa).

The protein belongs to the RNA polymerase beta chain family. The DNA-dependent RNA polymerase used for intermediate and late genes expression consists of eight subunits (147) kDa, (133) kDa, (35) kDa, (30) kDa, (22) kDa, (19) kDa, (18) kDa and (7) kDa totalling more than 500 kDa in mass. The same holoenzyme, with the addition of the transcription-specificity factor RAP94, is used for early gene expression.

Its subcellular location is the virion. It catalyses the reaction RNA(n) + a ribonucleoside 5'-triphosphate = RNA(n+1) + diphosphate. Part of the DNA-dependent RNA polymerase which catalyzes the transcription of viral DNA into RNA using the four ribonucleoside triphosphates as substrates. Responsible for the transcription of early, intermediate and late genes. DNA-dependent RNA polymerase associates with the early transcription factor (ETF), itself composed of D6 and A7, thereby allowing the early genes transcription. Late transcription, and probably also intermediate transcription, require newly synthesized RNA polymerase. This Oryctolagus cuniculus (Rabbit) protein is DNA-directed RNA polymerase 132 kDa polypeptide (RPO132).